The chain runs to 187 residues: Peptide deformylase 2 (187 aa).

Positions 107 and 149 each coordinate Fe cation. Residue Glu150 is part of the active site. Residue His153 coordinates Fe cation.

It belongs to the polypeptide deformylase family. Requires Fe(2+) as cofactor.

The enzyme catalyses N-terminal N-formyl-L-methionyl-[peptide] + H2O = N-terminal L-methionyl-[peptide] + formate. In terms of biological role, removes the formyl group from the N-terminal Met of newly synthesized proteins. Requires at least a dipeptide for an efficient rate of reaction. N-terminal L-methionine is a prerequisite for activity but the enzyme has broad specificity at other positions. This is Peptide deformylase 2 from Gloeobacter violaceus (strain ATCC 29082 / PCC 7421).